A 197-amino-acid chain; its full sequence is RNA chaperone ProQ (197 aa).

Positions 115-138 (RAAAKKAQQKKHPRKPANKNLKKE) are disordered. The span at 117–131 (AAKKAQQKKHPRKPA) shows a compositional bias: basic residues.

It belongs to the ProQ family.

It is found in the cytoplasm. Its function is as follows. RNA chaperone with significant RNA binding, RNA strand exchange and RNA duplexing activities. The sequence is that of RNA chaperone ProQ from Haemophilus influenzae (strain ATCC 51907 / DSM 11121 / KW20 / Rd).